Consider the following 305-residue polypeptide: Olfactory receptor 9G19 (305 aa).

Topologically, residues 1–24 (MDQNNNTVSEFIMLGFTTDPVIQK) are extracellular. The helical transmembrane segment at 25 to 45 (VLFAVFLVVYTLTLMGNSSLI) threads the bilayer. Residues 46-55 (MLICNDSRLH) lie on the Cytoplasmic side of the membrane. The helical transmembrane segment at 56 to 76 (TPMYFFIGNLSFLDLGLSSVY) threads the bilayer. The Extracellular portion of the chain corresponds to 77 to 96 (TPKILETCISEDKSISFAGC). A disulfide bond links Cys-96 and Cys-178. Residues 97–117 (VAQFFFSAALDYTECYLLAAM) traverse the membrane as a helical segment. The Cytoplasmic portion of the chain corresponds to 118-138 (AYDRYVAISKPLLYSQAMSLK). The helical transmembrane segment at 139–159 (LCVCFVVASYVGGFINSVIIT) threads the bilayer. Residues 160-204 (KDTFALTFCNDNVIDDFFCDIPPLVKLACGKKKSFQSVLFFLLTS) are Extracellular-facing. Residues 205–225 (NVIIPIVFILATYLFIIATIL) form a helical membrane-spanning segment. Residues 226 to 236 (RIRSTQGRLKA) lie on the Cytoplasmic side of the membrane. The helical transmembrane segment at 237–257 (FSTCSSHLISVTLYYGSILYI) threads the bilayer. The Extracellular portion of the chain corresponds to 258-270 (YARPRSSYSLDRD). The chain crosses the membrane as a helical span at residues 271–291 (KIVSTFYTVVFPMLNPLIYSL). Residues 292-305 (RNKDVKEALNKLLK) lie on the Cytoplasmic side of the membrane.

This sequence belongs to the G-protein coupled receptor 1 family.

It is found in the cell membrane. Odorant receptor. The sequence is that of Olfactory receptor 9G19 from Mus musculus (Mouse).